Reading from the N-terminus, the 212-residue chain is Cytidylate kinase (212 aa).

ATP is bound at residue 11 to 19 (GPAASGKGT). Residues 50 to 69 (GGDPADPAASEEQARSLSRL) are disordered.

It belongs to the cytidylate kinase family. Type 1 subfamily.

It localises to the cytoplasm. It carries out the reaction CMP + ATP = CDP + ADP. The catalysed reaction is dCMP + ATP = dCDP + ADP. In Acidiphilium cryptum (strain JF-5), this protein is Cytidylate kinase.